Reading from the N-terminus, the 186-residue chain is Translation initiation factor IF-3 (186 aa).

The tract at residues 1–20 (MINRSAGKDRDRSRSGDKEL) is disordered.

This sequence belongs to the IF-3 family. Monomer.

The protein localises to the cytoplasm. Functionally, IF-3 binds to the 30S ribosomal subunit and shifts the equilibrium between 70S ribosomes and their 50S and 30S subunits in favor of the free subunits, thus enhancing the availability of 30S subunits on which protein synthesis initiation begins. The chain is Translation initiation factor IF-3 from Borrelia hermsii (strain HS1 / DAH).